Here is a 25-residue protein sequence, read N- to C-terminus: Caerin-1.19 (25 aa).

Leu25 carries the post-translational modification Leucine amide.

Belongs to the frog skin active peptide (FSAP) family. Caerin subfamily. In terms of tissue distribution, expressed by the skin dorsal glands.

The protein resides in the secreted. In terms of biological role, caerin-1.19 shows significant activity against Gram-positive organisms, but is less effective against Gram-negative organisms. This Ranoidea gracilenta (Dainty green tree frog) protein is Caerin-1.19.